Consider the following 360-residue polypeptide: Probable dual-specificity RNA methyltransferase RlmN (360 aa).

Glutamate 91 serves as the catalytic Proton acceptor. The Radical SAM core domain occupies 97-335 (QHYGQSVCVT…CVVRQEHGTD (239 aa)). A disulfide bridge links cysteine 104 with cysteine 340. The [4Fe-4S] cluster site is built by cysteine 111, cysteine 115, and cysteine 118. Residues 163 to 164 (GE), serine 195, 218 to 220 (SLH), and asparagine 296 each bind S-adenosyl-L-methionine. Cysteine 340 acts as the S-methylcysteine intermediate in catalysis.

The protein belongs to the radical SAM superfamily. RlmN family. [4Fe-4S] cluster serves as cofactor.

The protein resides in the cytoplasm. It carries out the reaction adenosine(2503) in 23S rRNA + 2 reduced [2Fe-2S]-[ferredoxin] + 2 S-adenosyl-L-methionine = 2-methyladenosine(2503) in 23S rRNA + 5'-deoxyadenosine + L-methionine + 2 oxidized [2Fe-2S]-[ferredoxin] + S-adenosyl-L-homocysteine. It catalyses the reaction adenosine(37) in tRNA + 2 reduced [2Fe-2S]-[ferredoxin] + 2 S-adenosyl-L-methionine = 2-methyladenosine(37) in tRNA + 5'-deoxyadenosine + L-methionine + 2 oxidized [2Fe-2S]-[ferredoxin] + S-adenosyl-L-homocysteine. Its function is as follows. Specifically methylates position 2 of adenine 2503 in 23S rRNA and position 2 of adenine 37 in tRNAs. The sequence is that of Probable dual-specificity RNA methyltransferase RlmN from Streptococcus equi subsp. zooepidemicus (strain MGCS10565).